We begin with the raw amino-acid sequence, 234 residues long: MLTSHFPLPFAGHRLHIVDFDASSFHEHDLLWLPHHDRLRSAGRKRKAEHLAGRIAAVHALREVGVRAVPGIGDKRQPLWPDGLFGSISHCASTALAVISRQRVGVDIEKIMSQHTATELAPSIIDSDERQILQASSLPFPLALTLAFSAKESVYKAFSDRVTLPGFDSAKITSLNATHISLHLLPAFAAMMAERTVRTEWFQRGNSVITLVSAITRFPHDRSAPASILSAIPR.

Mg(2+) is bound by residues Asp107, Glu109, and Glu152.

It belongs to the P-Pant transferase superfamily. EntD family. In terms of assembly, entB, EntD, EntE, and EntF form a multienzyme complex called enterobactin synthase. Requires Mg(2+) as cofactor.

Its subcellular location is the membrane. The catalysed reaction is apo-[aryl-carrier protein] + CoA = holo-[aryl-carrier protein] + adenosine 3',5'-bisphosphate + H(+). The enzyme catalyses apo-[peptidyl-carrier protein] + CoA = holo-[peptidyl-carrier protein] + adenosine 3',5'-bisphosphate + H(+). It functions in the pathway siderophore biosynthesis; enterobactin biosynthesis. In terms of biological role, involved in the biosynthesis of the siderophore enterobactin (enterochelin), which is a macrocyclic trimeric lactone of N-(2,3-dihydroxybenzoyl)-serine. The serine trilactone serves as a scaffolding for the three catechol functionalities that provide hexadentate coordination for the tightly ligated iron(2+) atoms. Plays an essential role in the assembly of the enterobactin by catalyzing the transfer of the 4'-phosphopantetheine (Ppant) moiety from coenzyme A to the apo-domains of both EntB (ArCP domain) and EntF (PCP domain) to yield their holo-forms which make them competent for the activation of 2,3-dihydroxybenzoate (DHB) and L-serine, respectively. This Salmonella typhi protein is Enterobactin synthase component D.